Reading from the N-terminus, the 70-residue chain is Sec-independent protein translocase protein TatA (70 aa).

Residues 1-21 form a helical membrane-spanning segment; sequence MFGLGGQELLLILLIILLLFG. Positions 47-70 are disordered; it reads EDEFNKAMSDPPEKKEKESPSDKG. The span at 57 to 70 shows a compositional bias: basic and acidic residues; sequence PPEKKEKESPSDKG.

Belongs to the TatA/E family. As to quaternary structure, forms a complex with TatC.

It localises to the cell inner membrane. Functionally, part of the twin-arginine translocation (Tat) system that transports large folded proteins containing a characteristic twin-arginine motif in their signal peptide across membranes. TatA could form the protein-conducting channel of the Tat system. This Prosthecochloris aestuarii (strain DSM 271 / SK 413) protein is Sec-independent protein translocase protein TatA.